The chain runs to 2023 residues: Protein Daple (2023 aa).

The Calponin-homology (CH) domain occupies 11–131; it reads NFMDSPLVVW…RMLLLILGCA (121 aa). Coiled coils occupy residues 250–415, 458–1064, and 1105–1419; these read RQHL…LLEE, NESA…VEKN, and LKQI…QYKF. Residues 1013-1035 form a disordered region; that stretch reads RHEEEAAHSEISQQTLGQTRSLP. A compositionally biased stretch (polar residues) spans 1022-1033; the sequence is EISQQTLGQTRS. Disordered stretches follow at residues 1441–1824 and 1837–2023; these read KPKK…GSAS and LRSN…YGCV. The segment covering 1442-1460 has biased composition (basic and acidic residues); the sequence is PKKESSRERPDAPRERIRS. Pro residues predominate over residues 1478–1491; sequence SAPPPPPPPLPPRQ. Polar residues-rich tracts occupy residues 1497-1518 and 1564-1585; these read DSMN…SSPA and TCST…SSSL. Composition is skewed to low complexity over residues 1623-1643 and 1667-1704; these read SAEF…KGSL and RLSQ…SPGS. The GBA signature appears at 1700-1728; sequence SSPGSEMVTLEEFLQESNALSPPTVQTGS. Polar residues-rich tracts occupy residues 1714 to 1727, 1752 to 1763, 1785 to 1799, and 1809 to 1824; these read QESN…VQTG, TPTNYVTPTVKT, LTDT…QTLP, and ALQQ…GSAS. The segment covering 1890–1904 has biased composition (basic and acidic residues); it reads VDPRRLSLAQPRDEF. Low complexity predominate over residues 1927-1945; the sequence is GSGSSRAGAARSGSAQPRG. The segment covering 1974 to 1988 has biased composition (basic and acidic residues); that stretch reads QEQREAESPLLKKAD. Residues 1989-2014 are compositionally biased toward polar residues; that stretch reads TTNLSYASKEQPTSKPASPDPNNDPQ. The short motif at 2020–2023 is the PDZ-binding element; sequence YGCV.

This sequence belongs to the CCDC88 family.

The protein resides in the cytoplasm. It is found in the cell junction. Its function is as follows. Positive regulator of Wnt signaling, acting synergistically with dvl2. Functions upstream of ctnnb1/beta-catenin in the canonical Wnt pathway, and also activates jnk in the Wnt/planar cell polarity (PCP) pathway. Acts as a non-receptor guanine nucleotide exchange factor which binds to and activates guanine nucleotide-binding protein G(i) alpha (Gi-alpha) subunits. This promotes apical cell constriction and subsequent bending of the neural plate during neurulation via arhgef18. The protein is Protein Daple of Danio rerio (Zebrafish).